The primary structure comprises 517 residues: DNA-binding protein Ikaros (517 aa).

The segment at Met1–Cys71 is disordered. At Ser13 the chain carries Phosphoserine. Thr23 carries the post-translational modification Phosphothreonine. Polar residues predominate over residues Leu37–Ser47. Lys58 participates in a covalent cross-link: Glycyl lysine isopeptide (Lys-Gly) (interchain with G-Cter in SUMO). Phosphoserine is present on residues Ser63 and Ser101. Residues Leu117 to His139 form a C2H2-type 1 zinc finger. Residue Thr140 is modified to Phosphothreonine. The C2H2-type 2 zinc-finger motif lies at Phe144–His166. Residues Phe153–His162 are required for both high-affinity DNA binding and pericentromeric heterochromatin localization. A Phosphoserine modification is found at Ser167. The C2H2-type 3 zinc finger occupies Phe172–His194. The segment at Tyr179–His194 is required for both high-affinity DNA binding and pericentromeric heterochromatin localization. Ser195 is modified (phosphoserine). A C2H2-type 4 zinc finger spans residues His200–His223. Lys239 is covalently cross-linked (Glycyl lysine isopeptide (Lys-Gly) (interchain with G-Cter in SUMO)). A phosphoserine mark is found at Ser259, Ser287, Ser293, Ser357, Ser360, Ser384, Ser386, Ser388, and Ser392. The interval Ser376 to Glu400 is disordered. At Thr393 the chain carries Phosphothreonine. Phosphoserine occurs at positions 397 and 440. 2 C2H2-type zinc fingers span residues Tyr457 to His479 and Phe488 to His512. Residues Arg463–Phe466 are required for binding PP1CC.

This sequence belongs to the Ikaros C2H2-type zinc-finger protein family. As to quaternary structure, heterodimer with other IKAROS family members. Interacts with IKZF4 and IKZF5. Component of the chromatin-remodeling NuRD repressor complex which includes at least HDAC1, HDAC2, RBBP4, RBBP7, IKZF1, MTA2, MBD2, MBD3, MTA1L1, CHD3 and CHD4. Interacts directly with the CHD4 component of the NuRD complex. Interacts directly with SMARCA4; the interaction associates IKFZ1 with the BAF complex. Interacts with SUMO1; the interaction sumoylates IKAROS, promoted by PIAS2 and PIAS3. Interacts with PIAS2 (isoform alpha); the interaction promotes sumoylation and reduces transcription repression. Interacts, to a lesser extent, with PIAS3. Interacts with PPP1CC; the interaction targets PPP1CC to pericentromeric heterochromatin, dephosphorylates IKAROS, stabilizes it and prevents it from degradation. Interacts with IKZF3. Post-translationally, phosphorylation at Ser-357 and Ser-360 downstream of SYK induces nuclear translocation. Phosphorylation controls cell-cycle progression from late G(1) stage to S stage. Hyperphosphorylated during G2/M phase. Dephosphorylated state during late G(1) phase. Phosphorylation on Thr-140 is required for DNA and pericentromeric location during mitosis. CK2 is the main kinase, in vitro. GSK3 and CDK may also contribute to phosphorylation of the C-terminal serine and threonine residues. Phosphorylation on these C-terminal residues reduces the DNA-binding ability. Phosphorylation/dephosphorylation events on Ser-13 and Ser-293 regulate TDT expression during thymocyte differentiation. Dephosphorylation by protein phosphatase 1 regulates stability and pericentromeric heterochromatin location. Phosphorylated in both lymphoid and non-lymphoid tissues. Sumoylated. Simultaneous sumoylation on the 2 sites results in a loss of both HDAC-dependent and HDAC-independent repression. Has no effect on pericentromeric heterochromatin location. Desumoylated by SENP1. In terms of processing, polyubiquitinated. In terms of tissue distribution, strongly expressed in T-cells and their progenitors,in B-cells, and in all early embryonic retinal progenitor cells (RPCs). Isoforms V and VI are the predominant isoforms in lymphocytes.

It localises to the nucleus. The protein localises to the cytoplasm. In terms of biological role, transcription regulator of hematopoietic cell differentiation. Binds gamma-satellite DNA. Binds with higher affinity to gamma satellite A. Plays a role in the development of lymphocytes, B- and T-cells. Binds and activates the enhancer (delta-A element) of the CD3-delta gene. Repressor of the TDT (terminal deoxynucleotidyltransferase) gene during thymocyte differentiation. Regulates transcription through association with both HDAC-dependent and HDAC-independent complexes. Targets the 2 chromatin-remodeling complexes, NuRD and BAF (SWI/SNF), in a single complex (PYR complex), to the beta-globin locus in adult erythrocytes. Increases normal apoptosis in adult erythroid cells. Confers early temporal competence to retinal progenitor cells (RPCs). Function is isoform-specific and is modulated by dominant-negative inactive isoforms. In Mus musculus (Mouse), this protein is DNA-binding protein Ikaros (Ikzf1).